The following is an 86-amino-acid chain: uncharacterized protein (86 aa).

3 helical membrane-spanning segments follow: residues 4–24, 34–54, and 64–84; these read ILII…IAAV, MGLV…ILIN, and DIAY…ARVL.

To M.jannaschii MJ1223.

The protein resides in the cell membrane. This is an uncharacterized protein from Methanothermobacter thermautotrophicus (strain ATCC 29096 / DSM 1053 / JCM 10044 / NBRC 100330 / Delta H) (Methanobacterium thermoautotrophicum).